The following is a 434-amino-acid chain: Probable exopolygalacturonase A (434 aa).

The signal sequence occupies residues 1-19; sequence MKLPILVTLFITLPALCVS. N46, N57, N106, N199, and N207 each carry an N-linked (GlcNAc...) asparagine glycan. The PbH1 1 repeat unit spans residues 232 to 253; the sequence is SSNIVIQDSRIVNTDDCVSFKP. D246 (proton donor) is an active-site residue. C248 and C265 are disulfide-bonded. N-linked (GlcNAc...) asparagine glycosylation occurs at N254. The stretch at 255 to 275 is one PbH1 2 repeat; it reads STQIVIQNLDCTGSHGISVGS. H269 is a catalytic residue. N-linked (GlcNAc...) asparagine glycosylation is found at N293, N329, and N354. A disulfide bridge links C392 with C398. An N-linked (GlcNAc...) asparagine glycan is attached at N400.

It belongs to the glycosyl hydrolase 28 family.

It localises to the secreted. It catalyses the reaction [(1-&gt;4)-alpha-D-galacturonosyl](n) + H2O = alpha-D-galacturonate + [(1-&gt;4)-alpha-D-galacturonosyl](n-1). Specific in hydrolyzing the terminal glycosidic bond of polygalacturonic acid and oligogalacturonates. This Aspergillus niger (strain ATCC MYA-4892 / CBS 513.88 / FGSC A1513) protein is Probable exopolygalacturonase A (pgxA).